Consider the following 332-residue polypeptide: L-lactate dehydrogenase A chain (332 aa).

The residue at position 2 (Ala2) is an N-acetylalanine. Lys5 bears the N6-acetyllysine; alternate mark. Residue Lys5 is modified to N6-succinyllysine; alternate. Lys14 carries the post-translational modification N6-acetyllysine. An NAD(+)-binding site is contributed by 29 to 57 (GAVGMACAISILMKDLADEVALVDVMEDK). At Lys57 the chain carries N6-acetyllysine; alternate. A Glycyl lysine isopeptide (Lys-Gly) (interchain with G-Cter in SUMO2); alternate cross-link involves residue Lys57. N6-acetyllysine is present on Lys81. Residue Arg106 participates in substrate binding. N6-acetyllysine; alternate is present on Lys118. N6-succinyllysine; alternate is present on Lys118. Lys126 carries the N6-acetyllysine modification. Asn138 serves as a coordination point for NAD(+). The substrate site is built by Asn138 and Arg169. His193 acts as the Proton acceptor in catalysis. Residues Lys224 and Lys232 each carry the N6-acetyllysine modification. Tyr239 bears the Phosphotyrosine mark. An N6-acetyllysine modification is found at Lys243. Thr248 contributes to the substrate binding site. The residue at position 309 (Thr309) is a Phosphothreonine. Lys318 carries the post-translational modification N6-acetyllysine; alternate. The residue at position 318 (Lys318) is an N6-succinyllysine; alternate. The residue at position 322 (Thr322) is a Phosphothreonine.

This sequence belongs to the LDH/MDH superfamily. LDH family. In terms of assembly, homotetramer. Interacts with PTEN upstream reading frame protein MP31. ISGylated.

It localises to the cytoplasm. The enzyme catalyses (S)-lactate + NAD(+) = pyruvate + NADH + H(+). Its pathway is fermentation; pyruvate fermentation to lactate; (S)-lactate from pyruvate: step 1/1. Functionally, interconverts simultaneously and stereospecifically pyruvate and lactate with concomitant interconversion of NADH and NAD(+). In Bos mutus grunniens (Wild yak), this protein is L-lactate dehydrogenase A chain (LDHA).